A 190-amino-acid polypeptide reads, in one-letter code: Holliday junction branch migration complex subunit RuvA (190 aa).

The domain I stretch occupies residues 1–63 (MIRKINATIE…EWNTSLYIFK (63 aa)). The domain II stretch occupies residues 64–138 (DKIERDVFES…NSFSAYSTGA (75 aa)). Positions 138–142 (ADTQS) are flexible linker. The domain III stretch occupies residues 143-190 (YGNNNLKEAIEALETLGFQRYEIMKVIGQLDLEDLKTEEIIKECLTRL).

This sequence belongs to the RuvA family. As to quaternary structure, homotetramer. Forms an RuvA(8)-RuvB(12)-Holliday junction (HJ) complex. HJ DNA is sandwiched between 2 RuvA tetramers; dsDNA enters through RuvA and exits via RuvB. An RuvB hexamer assembles on each DNA strand where it exits the tetramer. Each RuvB hexamer is contacted by two RuvA subunits (via domain III) on 2 adjacent RuvB subunits; this complex drives branch migration. In the full resolvosome a probable DNA-RuvA(4)-RuvB(12)-RuvC(2) complex forms which resolves the HJ.

It is found in the cytoplasm. Its function is as follows. The RuvA-RuvB-RuvC complex processes Holliday junction (HJ) DNA during genetic recombination and DNA repair, while the RuvA-RuvB complex plays an important role in the rescue of blocked DNA replication forks via replication fork reversal (RFR). RuvA specifically binds to HJ cruciform DNA, conferring on it an open structure. The RuvB hexamer acts as an ATP-dependent pump, pulling dsDNA into and through the RuvAB complex. HJ branch migration allows RuvC to scan DNA until it finds its consensus sequence, where it cleaves and resolves the cruciform DNA. In Petrotoga mobilis (strain DSM 10674 / SJ95), this protein is Holliday junction branch migration complex subunit RuvA.